A 380-amino-acid chain; its full sequence is Chaperone protein DnaJ (380 aa).

A J domain is found at 5 to 72; that stretch reads DYYETLGVAK…QKRAAYDQYG (68 aa). The segment at 140–218 adopts a CR-type zinc-finger fold; it reads GKDTQIRIPS…CNGAGRIKSN (79 aa). Positions 153, 156, 170, 173, 192, 195, 206, and 209 each coordinate Zn(2+). CXXCXGXG motif repeat units follow at residues 153 to 160, 170 to 177, 192 to 199, and 206 to 213; these read CSTCDGTG, CPTCSGSG, CPSCHGTG, and CTACNGAG. A disordered region spans residues 357-380; it reads LKKGGERHSPNAKSWTDRVKDLFK.

It belongs to the DnaJ family. Homodimer. The cofactor is Zn(2+).

The protein resides in the cytoplasm. Functionally, participates actively in the response to hyperosmotic and heat shock by preventing the aggregation of stress-denatured proteins and by disaggregating proteins, also in an autonomous, DnaK-independent fashion. Unfolded proteins bind initially to DnaJ; upon interaction with the DnaJ-bound protein, DnaK hydrolyzes its bound ATP, resulting in the formation of a stable complex. GrpE releases ADP from DnaK; ATP binding to DnaK triggers the release of the substrate protein, thus completing the reaction cycle. Several rounds of ATP-dependent interactions between DnaJ, DnaK and GrpE are required for fully efficient folding. Also involved, together with DnaK and GrpE, in the DNA replication of plasmids through activation of initiation proteins. This chain is Chaperone protein DnaJ, found in Methylibium petroleiphilum (strain ATCC BAA-1232 / LMG 22953 / PM1).